Here is an 86-residue protein sequence, read N- to C-terminus: Progonadoliberin IIA (86 aa).

Residues 1-24 (MVHICRLFVVMGMLLCLSAQFASS) form the signal peptide. Residue Gln25 is modified to Pyrrolidone carboxylic acid. Position 34 is a glycine amide (Gly34).

This sequence belongs to the GnRH family. Olfactory bulbs, hypothalamus and telencephalon, midbrain and posterior brain areas.

It is found in the secreted. Stimulates the secretion of gonadotropins. The chain is Progonadoliberin IIA (gnrh2a) from Carassius auratus (Goldfish).